Consider the following 732-residue polypeptide: Small conductance calcium-activated potassium channel protein 3 (732 aa).

The span at 1–11 shows a compositional bias: basic and acidic residues; sequence MDTSGHFHDSG. Disordered stretches follow at residues 1 to 82 and 103 to 162; these read MDTS…QQAP and HSSP…ASPL. The segment covering 35–59 has biased composition (pro residues); it reads QPPPPSAPPAVPQQPPGPLLQPQPP. Low complexity predominate over residues 60-82; that stretch reads QLQQQQQQQQQQQQQQQQQQQAP. A compositionally biased stretch (polar residues) spans 113–133; that stretch reads NSANSTAILHPSSRQGSQLNL. The span at 139-148 shows a compositional bias: low complexity; it reads GHSPSSTATS. Ser168 carries the phosphoserine modification. The span at 241–257 shows a compositional bias: polar residues; sequence THNHQHAGTTAGSTTFP. Residues 241-260 form a disordered region; sequence THNHQHAGTTAGSTTFPKAN. Residues 289–309 traverse the membrane as a helical segment; the sequence is LIFGMFGIVVMVIETELSWGL. Residues 316–336 form a helical membrane-spanning segment; sequence FSLALKCLISLSTIILLGLII. The chain crosses the membrane as a helical span at residues 367 to 387; the sequence is ISLEMLVCAIHPIPGEYKFFW. The chain crosses the membrane as a helical span at residues 406–426; sequence IILSIPMFLRLYLIARVMLLH. A helical transmembrane segment spans residues 455–475; the sequence is LMTICPGTVLLVFSISLWIIA. An intramembrane region (pore-forming) is located at residues 495–515; that stretch reads FLGAMWLISITFLSIGYGDMV. Residues 524–544 form a helical membrane-spanning segment; it reads VCLLTGIMGAGCTALVVAVVA. Positions 562–638 are calmodulin-binding; it reads DTQLTKRIKN…LVDLSKMQNV (77 aa). A coiled-coil region spans residues 643-670; the sequence is ITELNDRSEDLEKQIGSLESKLEHLTAS. A disordered region spans residues 704–732; sequence GTSHAPPSDSPIGISSTSFPTPYTSSSSC. Residues 718–732 are compositionally biased toward low complexity; sequence SSTSFPTPYTSSSSC.

It belongs to the potassium channel KCNN family. KCa2.3/KCNN3 subfamily. In terms of assembly, homodimer. Heteromultimer with KCNN2 or KCNN1; this modulates plasma membrane expression and consequently the small conductance calcium-activated potassium channel activity. The complex is composed of 4 channel subunits each of which binds to a calmodulin subunit which regulates the channel activity through calcium-binding. Interacts with CALM1.

The protein localises to the cell membrane. The protein resides in the cytoplasm. It is found in the myofibril. Its subcellular location is the sarcomere. It localises to the z line. It catalyses the reaction K(+)(in) = K(+)(out). Inhibited by bee venom neurotoxin apamin. Its function is as follows. Small conductance calcium-activated potassium channel that mediates the voltage-independent transmembrane transfer of potassium across the cell membrane through a constitutive interaction with calmodulin which binds the intracellular calcium allowing its opening. The current is characterized by a voltage-independent activation, an intracellular calcium concentration increase-dependent activation and a single-channel conductance of 10 picosiemens. Also presents an inwardly rectifying current, thus reducing its already small outward conductance of potassium ions, which is particularly the case when the membrane potential displays positive values, above + 20 mV. Activation is followed by membrane hyperpolarization. Thought to regulate neuronal excitability by contributing to the slow component of synaptic afterhyperpolarization. The sequence is that of Small conductance calcium-activated potassium channel protein 3 from Rattus norvegicus (Rat).